We begin with the raw amino-acid sequence, 195 residues long: MAKLYFNYSTMNAGKSTLLLQASYNYIERGMQTYLLTANFDDRAGMGRIGSRIGIEAEADTYTQSDDLFAKIDARLKAGPCACVLVDEAQWMTRDQVWQLARAVDDLGVPVMCYGLRVDFRGELFPGSAALLALADEMREVRTICHCGRKATMVIRVGEDGNALAEGAQIEVGGNDRYISLCRKHFREAVGDVPV.

ATP-binding positions include 9–16 (STMNAGKS) and 87–90 (DEAQ). The active-site Proton acceptor is the glutamate 88. The Zn(2+) site is built by cysteine 145, cysteine 147, cysteine 182, and histidine 185.

It belongs to the thymidine kinase family. As to quaternary structure, homotetramer.

The protein localises to the cytoplasm. The enzyme catalyses thymidine + ATP = dTMP + ADP + H(+). This chain is Thymidine kinase, found in Jannaschia sp. (strain CCS1).